We begin with the raw amino-acid sequence, 191 residues long: Protein Ves (191 aa).

The protein belongs to the Ves family.

This is Protein Ves from Escherichia coli (strain UTI89 / UPEC).